The primary structure comprises 105 residues: Putative membrane protein insertion efficiency factor (105 aa).

It belongs to the UPF0161 family.

It is found in the cell inner membrane. Could be involved in insertion of integral membrane proteins into the membrane. This chain is Putative membrane protein insertion efficiency factor, found in Nitratidesulfovibrio vulgaris (strain DSM 19637 / Miyazaki F) (Desulfovibrio vulgaris).